The chain runs to 2145 residues: Adenylate cyclase (2145 aa).

4 disordered regions span residues 1–115 (MPRN…RMSD), 127–236 (DPAG…SGAR), 266–307 (GKEH…PVPK), and 329–547 (VRDI…GPTD). Low complexity-rich tracts occupy residues 7-23 (SSRF…SARS), 35-68 (PSAS…APSR), and 89-107 (SPTS…SSNS). 2 stretches are compositionally biased toward polar residues: residues 134–148 (SRTQ…SLSQ) and 159–205 (PASS…TESP). Positions 217 to 234 (SIASITTTASSQGSRASG) are enriched in low complexity. The segment covering 269-281 (HRSHSYSHARPHR) has biased composition (basic residues). The segment covering 343–357 (NDSSQQNNPPKTSGS) has biased composition (polar residues). The span at 377–403 (KSNEDPRSLRPTVSREDSTISVPKDRN) shows a compositional bias: basic and acidic residues. A compositionally biased stretch (polar residues) spans 404 to 441 (GSSTMYGTRSRAQSPAPSTTGSYWGHKSGSTDGQTSPG). Composition is skewed to basic and acidic residues over residues 454-466 (RLKE…DLKK) and 495-511 (ADGK…RPDL). In terms of domain architecture, Ras-associating spans 637–727 (HNYCIRVFRA…IEDIGREDNS (91 aa)). LRR repeat units lie at residues 779-800 (EIIS…FISV), 803-824 (NLRD…FGYA), 826-847 (RLTM…ALHN), 850-871 (GLLK…FEAF), 873-894 (VLRT…LAKL), 896-917 (NLVD…VGQM), 919-941 (SLER…FKNL), 943-964 (SLRE…SQLP), 965-986 (KLEI…FERV), 987-1006 (RSIK…APVP), 1007-1028 (TLKA…FHNM), 1030-1051 (NLER…IGNL), 1053-1074 (RLEY…IGCL), 1076-1097 (ELKR…LWWA), and 1099-1120 (KLDY…ASRA). The segment at 1114–1226 (PKPASRAPHP…SSRKDSSHTQ (113 aa)) is disordered. Low complexity-rich tracts occupy residues 1160 to 1179 (RPSQ…VPGG) and 1201 to 1217 (SRST…PTAS). 6 LRR repeats span residues 1235 to 1255 (SLRY…DQLC), 1259 to 1280 (NLRV…SIKS), 1283 to 1304 (QLVE…DLEE), 1307 to 1328 (MLQT…ISRA), 1330 to 1352 (KLTV…PYDW), and 1359 to 1380 (NLRY…SVPT). Positions 1432–1709 (PYGMADTLGS…NKMTVQMLGV (278 aa)) constitute a PPM-type phosphatase domain. The segment at 1718–1760 (RSRQHKGQSMPVYASLQDDGGSSTGMRRARKARDGPLDSTLGR) is disordered. One can recognise a Guanylate cyclase domain in the interval 1773–1910 (AIVFTDIKNS…PMVNKASRIS (138 aa)). Mg(2+) contacts are provided by Asp-1778 and Asp-1821.

It belongs to the adenylyl cyclase class-3 family. Requires Mg(2+) as cofactor.

It carries out the reaction ATP = 3',5'-cyclic AMP + diphosphate. Its function is as follows. Plays essential roles in regulation of cellular metabolism by catalyzing the synthesis of a second messenger, cAMP. In Podospora anserina (Pleurage anserina), this protein is Adenylate cyclase.